The following is a 1248-amino-acid chain: Reverse gyrase 1 (1248 aa).

Residues 7–44 form an RG N-terminal-type zinc finger; that stretch reads IPPSIYLFSCPNCGRSISTYRLLLGSVCNICLEEDKEY. Zn(2+) is bound by residues cysteine 16, cysteine 19, cysteine 34, and cysteine 37. Residues glutamine 92 and 109 to 116 each bind ATP; that span reads APPGLGKT. One can recognise a Helicase ATP-binding domain in the interval 96-262; that stretch reads IYRLLSGESF…KKYRENTQKN (167 aa). The DEAD box motif lies at 219-222; it reads DDVD. Residues 621 to 1248 are topoisomerase I; it reads QKVKTVLLVV…QVYEEINEIR (628 aa). Residues 625–789 enclose the Toprim domain; it reads TVLLVVESPN…NIRRAEFHEV (165 aa). Glutamate 631 lines the Mg(2+) pocket. The RG C-terminal-type; atypical zinc-finger motif lies at 706–735; sequence IKKCENNHQFTDFFESNKCPRCMTTKVRYD. Zn(2+) is bound by residues cysteine 709, histidine 713, cysteine 724, and cysteine 727. A Mg(2+)-binding site is contributed by aspartate 758. A Topo IA-type catalytic domain is found at 805-1248; that stretch reads NVNLVKSQLV…QVYEEINEIR (444 aa). The O-(5'-phospho-DNA)-tyrosine intermediate role is filled by tyrosine 965.

This sequence in the N-terminal section; belongs to the DEAD box helicase family. DDVD subfamily. The protein in the C-terminal section; belongs to the type IA topoisomerase family. In terms of assembly, monomer. Zn(2+) serves as cofactor. Requires Mg(2+) as cofactor. In terms of processing, the N-terminus is blocked.

Its subcellular location is the cytoplasm. The enzyme catalyses ATP + H2O = ADP + phosphate + H(+). Functionally, modifies the topological state of DNA by introducing positive supercoils in an ATP-dependent process. Increases the linking number in steps of +1. Has a DNA-stimulated ATPase activity; closed circular ssDNA stimulates ATPase much better than dsDNA although negative supercoiled, positive supercoiled and relaxed dsDNA all stimulate ATPase activity. All NTPs permit topoisomerization (relaxation) of negatively supercoiled dsDNA without nucleotide hydrolysis. It transiently cleaves a single DNA strand and remains covalently bound to the 5' DNA end. Acts via a tyrosine residue. Reverse gyrase binds and unwinds DNA independently of ATP binding and DNA cleavage. May be involved in rewinding the DNA strands in the regions of the chromosome that have opened up to allow transcription or replication, probably acts via ssDNA regions of the chromosome. The polypeptide is Reverse gyrase 1 (Sulfolobus acidocaldarius (strain ATCC 33909 / DSM 639 / JCM 8929 / NBRC 15157 / NCIMB 11770)).